The primary structure comprises 856 residues: Inactive rhomboid protein 2 (856 aa).

Positions 1–115 are disordered; sequence MASADKNGGS…PGFRRQASLS (115 aa). At 1 to 409 the chain is on the cytoplasmic side; it reads MASADKNGGS…HRPYFTYWLT (409 aa). S90 bears the Phosphoserine mark. Positions 94–106 are enriched in basic and acidic residues; it reads PRSRWQESSEKRP. Phosphoserine is present on residues S113 and S117. The disordered stretch occupies residues 165 to 184; sequence PSQEAPSFQGTESPKPCKMP. An involved in interaction with FRMD8 region spans residues 191-271; sequence ARGRAFRHPE…GQRCRVVKRS (81 aa). Phosphoserine occurs at positions 323, 325, and 328. Residues 410-430 traverse the membrane as a helical segment; it reads FVHVIITLLVICTYGIAPVGF. Residues 431-660 lie on the Lumenal side of the membrane; sequence AQHVTTQLVL…PDQFYRLWLS (230 aa). Residues 531–553 form a disordered region; the sequence is GPPMDKSDLGQKRTSGAVCHQDP. The helical transmembrane segment at 661–681 threads the bilayer; that stretch reads LFLHAGVVHCLVSVVFQMTIL. Topologically, residues 682–692 are cytoplasmic; that stretch reads RDLEKLAGWHR. Residues 693–713 form a helical membrane-spanning segment; that stretch reads IAIIFILSGITGNLASAIFLP. Residues 714–715 are Lumenal-facing; that stretch reads YR. A helical transmembrane segment spans residues 716 to 736; sequence AEVGPAGSQFGLLACLFVELF. At 737–747 the chain is on the cytoplasmic side; it reads QSWPLLERPWK. Residues 748-768 traverse the membrane as a helical segment; sequence AFLNLSAIVLFLFICGLLPWI. At 769–773 the chain is on the lumenal side; that stretch reads DNIAH. A helical membrane pass occupies residues 774–794; it reads IFGFLSGLLLAFAFLPYITFG. The Cytoplasmic portion of the chain corresponds to 795–802; sequence TSDKYRKR. The chain crosses the membrane as a helical span at residues 803 to 823; that stretch reads ALILVSLLAFAGLFAALVLWL. The Lumenal segment spans residues 824–856; it reads YIYPINWPWIEHLTCFPFTSRFCEKYELDQVLH.

Belongs to the peptidase S54 family. Interacts with EGF. Interacts (via cytoplasmic N-terminus) with FRMD8/iTAP; this interaction leads to mutual protein stabilization. Interacts with ADAM17/TACE. Found in the epidermis and esophageal epithelium.

It localises to the endoplasmic reticulum membrane. The protein resides in the cell membrane. Its function is as follows. Regulates ADAM17 protease, a sheddase of the epidermal growth factor (EGF) receptor ligands and TNF, thereby plays a role in sleep, cell survival, proliferation, migration and inflammation. Does not exhibit any protease activity on its own. The sequence is that of Inactive rhomboid protein 2 (RHBDF2) from Homo sapiens (Human).